A 1017-amino-acid chain; its full sequence is Probable beta-galactosidase B (1017 aa).

The first 20 residues, 1–20 (MTRITKLCVLLLSSIGLLAA), serve as a signal peptide directing secretion. Asn23 carries N-linked (GlcNAc...) asparagine glycosylation. Tyr90 is a substrate binding site. A glycan (N-linked (GlcNAc...) asparagine) is linked at Asn100. Positions 135, 136, and 137 each coordinate substrate. Asn158 carries an N-linked (GlcNAc...) asparagine glycan. Substrate is bound at residue Asn195. Glu196 functions as the Proton donor in the catalytic mechanism. A glycan (N-linked (GlcNAc...) asparagine) is linked at Asn211. Tyr265 serves as a coordination point for substrate. Cys271 and Cys324 are oxidised to a cystine. Glu308 functions as the Nucleophile in the catalytic mechanism. Tyr373 lines the substrate pocket. Asn411, Asn417, Asn456, Asn628, Asn681, Asn737, Asn770, Asn777, Asn785, Asn828, and Asn829 each carry an N-linked (GlcNAc...) asparagine glycan.

It belongs to the glycosyl hydrolase 35 family.

Its subcellular location is the secreted. It catalyses the reaction Hydrolysis of terminal non-reducing beta-D-galactose residues in beta-D-galactosides.. In terms of biological role, cleaves beta-linked terminal galactosyl residues from gangliosides, glycoproteins, and glycosaminoglycans. This Aspergillus niger (strain ATCC MYA-4892 / CBS 513.88 / FGSC A1513) protein is Probable beta-galactosidase B (lacB).